Reading from the N-terminus, the 387-residue chain is Gamma-butyrobetaine dioxygenase (387 aa).

Positions 38, 40, 43, and 82 each coordinate Zn(2+). Fe cation contacts are provided by histidine 202, aspartate 204, and histidine 347. The residue at position 351 (serine 351) is a Phosphoserine.

The protein belongs to the gamma-BBH/TMLD family. Requires Fe(2+) as cofactor. L-ascorbate is required as a cofactor.

It is found in the cytoplasm. It catalyses the reaction 4-(trimethylamino)butanoate + 2-oxoglutarate + O2 = carnitine + succinate + CO2. It functions in the pathway amine and polyamine biosynthesis; carnitine biosynthesis. Functionally, catalyzes the formation of L-carnitine from gamma-butyrobetaine. This is Gamma-butyrobetaine dioxygenase (BBOX1) from Pongo abelii (Sumatran orangutan).